A 273-amino-acid chain; its full sequence is Large ribosomal subunit protein uL2cz/uL2cy (273 aa).

Disordered regions lie at residues 1–22 and 225–273; these read MAKH…DRQV and PVDH…RRRK.

Belongs to the universal ribosomal protein uL2 family. Part of the 50S ribosomal subunit.

The protein resides in the plastid. It is found in the chloroplast. This Zea mays (Maize) protein is Large ribosomal subunit protein uL2cz/uL2cy (rpl2-A).